Consider the following 552-residue polypeptide: Gamma-aminobutyric acid receptor subunit alpha-4 (552 aa).

Residues 1-35 form the signal peptide; sequence MVSVQKVPAIALCSGVSLALLHFLCLAACLNESPG. At 36 to 259 the chain is on the extracellular side; sequence QNSKDEKLCP…FHLRRKMGYF (224 aa). Asn47 is a glycosylation site (N-linked (GlcNAc...) asparagine). Arg100 serves as a coordination point for 4-aminobutanoate. Residues Asn144 and Asn157 are each glycosylated (N-linked (GlcNAc...) asparagine). Thr163 serves as a coordination point for 4-aminobutanoate. Cys172 and Cys186 form a disulfide bridge. A helical membrane pass occupies residues 260 to 280; that stretch reads MIQTYIPCIMTVILSQVSFWI. The Cytoplasmic segment spans residues 281–284; the sequence is NKES. Residues 285–305 form a helical membrane-spanning segment; the sequence is VPARTVFGITTVLTMTTLSIS. Over 306–318 the chain is Extracellular; it reads ARHSLPKVSYATA. The helical transmembrane segment at 319-341 threads the bilayer; sequence MDWFIAVCFAFVFSALIEFAAVN. At 342 to 515 the chain is on the cytoplasmic side; that stretch reads YFTNIQMQKA…PPPSGSGTSK (174 aa). Disordered regions lie at residues 353–480 and 492–513; these read KKIS…FGSR and GAAG…GSGT. The span at 396–406 shows a compositional bias: basic and acidic residues; that stretch reads SESDVKSRTEV. The segment covering 407 to 422 has biased composition (polar residues); sequence GNHSSKTSAVQESSEA. Residues 445–458 are compositionally biased toward low complexity; that stretch reads SAAARGLSSAASPS. The segment covering 500–509 has biased composition (pro residues); that stretch reads TPPPPAPPPS. A helical transmembrane segment spans residues 516–538; the sequence is IDKYARILFPVTFGAFNMVYWVV. Over 539–552 the chain is Extracellular; it reads YLSKDTMEKSESLM.

The protein belongs to the ligand-gated ion channel (TC 1.A.9) family. Gamma-aminobutyric acid receptor (TC 1.A.9.5) subfamily. GABRA4 sub-subfamily. Heteropentamer, formed by a combination of alpha (GABRA1-6), beta (GABRB1-3), gamma (GABRG1-3), delta (GABRD), epsilon (GABRE), rho (GABRR1-3), pi (GABRP) and theta (GABRQ) chains, each subunit exhibiting distinct physiological and pharmacological properties. In terms of tissue distribution, expressed in the brain.

It is found in the cell membrane. It localises to the postsynaptic cell membrane. The enzyme catalyses chloride(in) = chloride(out). With respect to regulation, potentiated by gaboxadol. Potentiated by histamine. Alpha subunit of the heteropentameric ligand-gated chloride channel gated by gamma-aminobutyric acid (GABA), a major inhibitory neurotransmitter in the brain. GABA-gated chloride channels, also named GABA(A) receptors (GABAAR), consist of five subunits arranged around a central pore and contain GABA active binding site(s) located at the alpha and beta subunit interface(s). Alpha-4/GABRA4 subunit often assembles with delta or gamma-2 subunits, in combination with beta subunits. When activated by GABA, GABAARs selectively allow the flow of chloride anions across the cell membrane down their electrochemical gradient. GABAARs containing alpha-4 are predominantly extrasynaptic, contributing to tonic inhibition in dentate granule cells and thalamic relay neurons. Extrasynaptic alpha-4-containing GABAARs control levels of excitability and network activity. GABAAR containing alpha-4-beta-3-delta subunits can simultaneously bind GABA and histamine where histamine binds at the interface of two neighboring beta subunits, which may be involved in the regulation of sleep and wakefulness. The sequence is that of Gamma-aminobutyric acid receptor subunit alpha-4 from Mus musculus (Mouse).